A 301-amino-acid polypeptide reads, in one-letter code: UDP-N-acetylenolpyruvoylglucosamine reductase (301 aa).

In terms of domain architecture, FAD-binding PCMH-type spans 24–190; it reads RVGGLAQFYD…VSAQLQLQPG (167 aa). The active site involves Arg169. The active-site Proton donor is Ser220. Glu290 is an active-site residue.

The protein belongs to the MurB family. Requires FAD as cofactor.

The protein localises to the cytoplasm. The catalysed reaction is UDP-N-acetyl-alpha-D-muramate + NADP(+) = UDP-N-acetyl-3-O-(1-carboxyvinyl)-alpha-D-glucosamine + NADPH + H(+). Its pathway is cell wall biogenesis; peptidoglycan biosynthesis. Functionally, cell wall formation. The polypeptide is UDP-N-acetylenolpyruvoylglucosamine reductase (Synechococcus sp. (strain ATCC 27144 / PCC 6301 / SAUG 1402/1) (Anacystis nidulans)).